Reading from the N-terminus, the 107-residue chain is V-type proton ATPase subunit G (107 aa).

It belongs to the V-ATPase G subunit family. V-ATPase is a heteromultimeric enzyme composed of a peripheral catalytic V1 complex (components A to H) attached to an integral membrane V0 proton pore complex (components: a, c, c', c'' and d).

Functionally, catalytic subunit of the peripheral V1 complex of vacuolar ATPase (V-ATPase). V-ATPase is responsible for acidifying a variety of intracellular compartments in eukaryotic cells. This chain is V-type proton ATPase subunit G (atp6v1g), found in Dictyostelium discoideum (Social amoeba).